The primary structure comprises 837 residues: Tuftelin-interacting protein 11 (837 aa).

Composition is skewed to basic and acidic residues over residues Met-1–Arg-13 and Val-53–Pro-64. 3 disordered regions span residues Met-1 to Arg-21, Val-53 to Arg-72, and Leu-85 to Ala-133. Phosphoserine occurs at positions 2, 59, and 98. Residues Glu-91 to Glu-102 are compositionally biased toward acidic residues. The span at Arg-103–Pro-116 shows a compositional bias: basic and acidic residues. The residue at position 144 (Ser-144) is a Phosphoserine. The G-patch domain maps to Thr-149–Ser-195. The interval Ile-179–Pro-236 is disordered. Position 210 is a phosphoserine (Ser-210). A Nuclear localization signal motif is present at residues Val-700–Asn-705. The tract at residues Ile-710–Leu-734 is required for nuclear speckle localization.

This sequence belongs to the TFP11/STIP family. In terms of assembly, identified in the spliceosome C complex. Found in the Intron Large (IL) complex, a post-mRNA release spliceosomal complex containing the excised intron, U2, U5 and U6 snRNPs, and splicing factors. Interacts with TUFT1. Interacts with DHX15; indicative for a recruitment of DHX15 to the IL complex. Interacts with GCFC2.

Its subcellular location is the cytoplasm. The protein localises to the nucleus. Its function is as follows. Involved in pre-mRNA splicing, specifically in spliceosome disassembly during late-stage splicing events. Intron turnover seems to proceed through reactions in two lariat-intron associated complexes termed Intron Large (IL) and Intron Small (IS). In cooperation with DHX15 seems to mediate the transition of the U2, U5 and U6 snRNP-containing IL complex to the snRNP-free IS complex leading to efficient debranching and turnover of excised introns. May play a role in the differentiation of ameloblasts and odontoblasts or in the forming of the enamel extracellular matrix. In Macaca fascicularis (Crab-eating macaque), this protein is Tuftelin-interacting protein 11 (TFIP11).